The following is a 187-amino-acid chain: Ribosome maturation factor RimM (187 aa).

Residues 94-168 (DDEFYHADLV…RVIVDMPDGL (75 aa)) enclose the PRC barrel domain. The tract at residues 167 to 187 (GLIGGDKPDTSDTAPLGQDFD) is disordered.

Belongs to the RimM family. As to quaternary structure, binds ribosomal protein uS19.

The protein localises to the cytoplasm. In terms of biological role, an accessory protein needed during the final step in the assembly of 30S ribosomal subunit, possibly for assembly of the head region. Essential for efficient processing of 16S rRNA. May be needed both before and after RbfA during the maturation of 16S rRNA. It has affinity for free ribosomal 30S subunits but not for 70S ribosomes. The sequence is that of Ribosome maturation factor RimM from Jannaschia sp. (strain CCS1).